We begin with the raw amino-acid sequence, 376 residues long: CCA-adding enzyme (376 aa).

2 residues coordinate ATP: G23 and R26. The CTP site is built by G23 and R26. 2 residues coordinate Mg(2+): E36 and D38. 3 residues coordinate ATP: R106, R152, and R155. CTP contacts are provided by R106, R152, and R155.

The protein belongs to the tRNA nucleotidyltransferase/poly(A) polymerase family. Bacterial CCA-adding enzyme type 2 subfamily. Mg(2+) serves as cofactor.

The catalysed reaction is a tRNA precursor + 2 CTP + ATP = a tRNA with a 3' CCA end + 3 diphosphate. It catalyses the reaction a tRNA with a 3' CCA end + 2 CTP + ATP = a tRNA with a 3' CCACCA end + 3 diphosphate. In terms of biological role, catalyzes the addition and repair of the essential 3'-terminal CCA sequence in tRNAs without using a nucleic acid template. Adds these three nucleotides in the order of C, C, and A to the tRNA nucleotide-73, using CTP and ATP as substrates and producing inorganic pyrophosphate. tRNA 3'-terminal CCA addition is required both for tRNA processing and repair. Also involved in tRNA surveillance by mediating tandem CCA addition to generate a CCACCA at the 3' terminus of unstable tRNAs. While stable tRNAs receive only 3'-terminal CCA, unstable tRNAs are marked with CCACCA and rapidly degraded. This is CCA-adding enzyme from Coxiella burnetii (strain RSA 331 / Henzerling II).